A 349-amino-acid chain; its full sequence is Protein Wnt-7b (349 aa).

The signal sequence occupies residues 1–24 (MHRNFRKWIFYVFLCFGVLYVKLG). Cystine bridges form between Cys73–Cys84, Cys123–Cys131, Cys133–Cys152, Cys200–Cys214, and Cys202–Cys209. 2 N-linked (GlcNAc...) asparagine glycosylation sites follow: Asn83 and Asn127. Ser206 carries O-palmitoleoyl serine; by PORCN lipidation. The disordered linker stretch occupies residues 238–266 (VEVVRASRLRQPTFLRIKQLRSYQKPMET). 6 disulfides stabilise this stretch: Cys278–Cys309, Cys294–Cys304, Cys308–Cys348, Cys324–Cys339, Cys326–Cys336, and Cys331–Cys332. N-linked (GlcNAc...) asparagine glycosylation is present at Asn295.

Belongs to the Wnt family. As to quaternary structure, forms a soluble 1:1 complex with AFM; this prevents oligomerization and is required for prolonged biological activity. The complex with AFM may represent the physiological form in body fluids. Interacts with FZD1 and FZD10. Interacts with FZD4 (in vitro). Interacts with PORCN. Interacts with glypican GPC3. Interacts (via intrinsically disordered linker region) with RECK; interaction with RECK confers ligand selectivity for Wnt7 in brain endothelial cells and allows these cells to selectively respond to Wnt7. In terms of processing, palmitoleoylation is required for efficient binding to frizzled receptors. Depalmitoleoylation leads to Wnt signaling pathway inhibition.

Its subcellular location is the secreted. It is found in the extracellular space. It localises to the extracellular matrix. Its function is as follows. Ligand for members of the frizzled family of seven transmembrane receptors that functions in the canonical Wnt/beta-catenin signaling pathway. Required for normal fusion of the chorion and the allantois during placenta development. Required for central nervous system (CNS) angiogenesis and blood-brain barrier regulation. The protein is Protein Wnt-7b (Wnt7b) of Mus musculus (Mouse).